The following is a 338-amino-acid chain: tRNA N6-adenosine threonylcarbamoyltransferase (338 aa).

Positions 110 and 114 each coordinate Fe cation. Substrate contacts are provided by residues valine 132 to glycine 136, aspartate 165, glycine 178, and asparagine 274. Aspartate 298 contributes to the Fe cation binding site.

This sequence belongs to the KAE1 / TsaD family. Fe(2+) is required as a cofactor.

The protein localises to the cytoplasm. The enzyme catalyses L-threonylcarbamoyladenylate + adenosine(37) in tRNA = N(6)-L-threonylcarbamoyladenosine(37) in tRNA + AMP + H(+). In terms of biological role, required for the formation of a threonylcarbamoyl group on adenosine at position 37 (t(6)A37) in tRNAs that read codons beginning with adenine. Is involved in the transfer of the threonylcarbamoyl moiety of threonylcarbamoyl-AMP (TC-AMP) to the N6 group of A37, together with TsaE and TsaB. TsaD likely plays a direct catalytic role in this reaction. The polypeptide is tRNA N6-adenosine threonylcarbamoyltransferase (Borrelia recurrentis (strain A1)).